The chain runs to 820 residues: Inhibitor of nuclear factor kappa-B kinase epsilon subunit homolog 1 (820 aa).

The region spanning 21 to 299 (LFNDESIGKG…TDIFEFQPVT (279 aa)) is the Protein kinase domain. Residues 27 to 35 (IGKGAYSEV) and K49 contribute to the ATP site. D149 serves as the catalytic Proton acceptor. A disordered region spans residues 758–798 (SPNKEQFPKPEQDSILESSIDEGSTSFESTPPSSPPDVGSN).

It belongs to the protein kinase superfamily. Ser/Thr protein kinase family. In terms of assembly, interacts with allo-1 (via N-terminus); the interaction is direct. As to expression, expressed in oocytes.

Its subcellular location is the cytoplasm. It carries out the reaction L-seryl-[protein] + ATP = O-phospho-L-seryl-[protein] + ADP + H(+). The enzyme catalyses L-threonyl-[protein] + ATP = O-phospho-L-threonyl-[protein] + ADP + H(+). In terms of biological role, serine/threonine-protein kinase, which plays a role in regulating allophagy, an autophagic process in which paternal organelles, including mitochondria and membranous organelles, are degraded in embryos. Phosphorylates the allophagy receptor allo-1, which is required for allophagy. This is Inhibitor of nuclear factor kappa-B kinase epsilon subunit homolog 1 from Caenorhabditis elegans.